The sequence spans 130 residues: Small ribosomal subunit protein uS8 (130 aa).

This sequence belongs to the universal ribosomal protein uS8 family. Part of the 30S ribosomal subunit. Contacts proteins S5 and S12.

One of the primary rRNA binding proteins, it binds directly to 16S rRNA central domain where it helps coordinate assembly of the platform of the 30S subunit. The polypeptide is Small ribosomal subunit protein uS8 (Nitrosococcus oceani (strain ATCC 19707 / BCRC 17464 / JCM 30415 / NCIMB 11848 / C-107)).